Consider the following 489-residue polypeptide: MFSFGFLITAVVFWVVTKVIYNAYFHPLRRFPGPFLNRATRLAYIYQVLGGKIHHSVLAMHQKYGDIVRLAPDELSFSHPDAWEHIMGHKKADQEEMGKAPWFYRTFKYEALSIVNEDRKPHARLRRPMSHGFSEQSLRDQGPVIRGYVDLFCQRLREASAKSQLVVLSDWLSYVAFDIVGDLSFGEPFGCLKEGKEDEWLTSMANLGTTGVIFQCLGFFPWIKEPLVMIFAKTMRKYRDAHLSSSTEKMRRRIEFNGERPDFIQGLLQKREQLNLRLEDLVSNAQLFIGAGAESTATLLMGVAYLLLKHDRVYEKLSDEIHSAFKNVDEITLTSVGQLPYLNACINETLRYYSPACNGLPRMVPKGGGYILGEYVPENTTVAVHHWALYHREKYFADPDSFRPERFLGDLEFANDQLKALQPFHVGPRNCLGRTLVYGETRLIFVLLIFHFHLRLAEESQNWMEQRHWLMWEKSPLMVHLTPREAVLC.

Helical transmembrane passes span 1 to 21 (MFSF…KVIY), 212 to 232 (VIFQ…MIFA), and 287 to 307 (LFIG…AYLL). N-linked (GlcNAc...) asparagine glycosylation is found at asparagine 347 and asparagine 379. Cysteine 431 contacts heme.

It belongs to the cytochrome P450 family. The cofactor is heme.

The protein resides in the membrane. It participates in secondary metabolite biosynthesis; terpenoid biosynthesis. Cytochrome P450 monooxygenase; part of the gene cluster that mediates the biosynthesis of paraherquonin, a meroterpenoid with a unique, highly congested hexacyclic molecular architecture. The first step of the pathway is the synthesis of 3,5-dimethylorsellinic acid (DMOA) by the polyketide synthase prhL. Synthesis of DMOA is followed by farnesylation by the prenyltransferase prhE, methylesterification by the methyl-transferase prhM, epoxidation of the prenyl chain by the flavin-dependent monooxygenase prhF, and cyclization of the farnesyl moiety by the terpene cyclase prhH, to yield the tetracyclic intermediate, protoaustinoid A. The short chain dehydrogenase prhI then oxidizes the C-3 alcohol group of the terpene cyclase product to transform protoaustinoid A into protoaustinoid B. The FAD-binding monooxygenase prhJ catalyzes the oxidation of protoaustinoid B into preaustinoid A which is further oxidized into preaustinoid A1 by FAD-binding monooxygenase phrK. Finally, prhA leads to berkeleydione via the berkeleyone B intermediate. PrhA is a multifunctional dioxygenase that first desaturates at C5-C6 to form berkeleyone B, followed by rearrangement of the A/B-ring to form the cycloheptadiene moiety in berkeleydione. Berkeleydione serves as the key intermediate for the biosynthesis of paraherquonin as well as many other meroterpenoids. The cytochrome P450 monooxygenases prhB, prhD, and prhN, as well as the isomerase prhC, are probably involved in the late stage of paraherquonin biosynthesis, after the production of berkeleydione. Especially prhC might be a multifunctional enzyme that catalyzes the D-ring expansion via intramolecular methoxy rearrangement, as well as the hydrolysis of the expanded D-ring. The protein is Cytochrome P450 monooxygenase prhB of Penicillium brasilianum.